We begin with the raw amino-acid sequence, 306 residues long: Pseudouridine-5'-phosphate glycosidase (306 aa).

The Proton donor role is filled by glutamate 27. Positions 88 and 108 each coordinate substrate. Aspartate 140 is a binding site for Mn(2+). 142-144 (SAD) contributes to the substrate binding site. Residue lysine 161 is the Nucleophile of the active site.

This sequence belongs to the pseudouridine-5'-phosphate glycosidase family. In terms of assembly, homotrimer. Requires Mn(2+) as cofactor.

The enzyme catalyses D-ribose 5-phosphate + uracil = psi-UMP + H2O. Catalyzes the reversible cleavage of pseudouridine 5'-phosphate (PsiMP) to ribose 5-phosphate and uracil. Functions biologically in the cleavage direction, as part of a pseudouridine degradation pathway. The chain is Pseudouridine-5'-phosphate glycosidase from Petrotoga mobilis (strain DSM 10674 / SJ95).